The sequence spans 310 residues: tRNA uridine(34) hydroxylase (310 aa).

Residues 127–225 (KNQNTIVIDT…YLDEISKEEN (99 aa)) form the Rhodanese domain. C185 acts as the Cysteine persulfide intermediate in catalysis.

It belongs to the TrhO family.

The enzyme catalyses uridine(34) in tRNA + AH2 + O2 = 5-hydroxyuridine(34) in tRNA + A + H2O. Functionally, catalyzes oxygen-dependent 5-hydroxyuridine (ho5U) modification at position 34 in tRNAs. In Prochlorococcus marinus (strain MIT 9215), this protein is tRNA uridine(34) hydroxylase.